A 648-amino-acid chain; its full sequence is Macrolide export ATP-binding/permease protein MacB (648 aa).

The ABC transporter domain maps to 5–243 (LELCNVSRSY…QGVDAAVVNT (239 aa)). An ATP-binding site is contributed by 41–48 (GVSGSGKS). The next 5 membrane-spanning stretches (helical) occupy residues 273-293 (LLTM…VVVG), 417-437 (ANVV…IGVA), 523-543 (LFLT…VMNI), 577-597 (VLVC…IAFM), and 611-631 (LTAL…FGWL).

The protein belongs to the ABC transporter superfamily. Macrolide exporter (TC 3.A.1.122) family. Homodimer. Part of the tripartite efflux system MacAB-TolC, which is composed of an inner membrane transporter, MacB, a periplasmic membrane fusion protein, MacA, and an outer membrane component, TolC. The complex forms a large protein conduit and can translocate molecules across both the inner and outer membranes. Interacts with MacA.

Its subcellular location is the cell inner membrane. Its function is as follows. Part of the tripartite efflux system MacAB-TolC. MacB is a non-canonical ABC transporter that contains transmembrane domains (TMD), which form a pore in the inner membrane, and an ATP-binding domain (NBD), which is responsible for energy generation. Confers resistance against macrolides. The polypeptide is Macrolide export ATP-binding/permease protein MacB (Salmonella typhimurium (strain LT2 / SGSC1412 / ATCC 700720)).